Consider the following 264-residue polypeptide: Thymidylate synthase (264 aa).

R21 contributes to the dUMP binding site. H51 contributes to the (6R)-5,10-methylene-5,6,7,8-tetrahydrofolate binding site. Position 126–127 (126–127 (RR)) interacts with dUMP. The active-site Nucleophile is the C146. DUMP is bound by residues 166-169 (RSAD), N177, and 207-209 (HIY). D169 is a binding site for (6R)-5,10-methylene-5,6,7,8-tetrahydrofolate. Residue A263 coordinates (6R)-5,10-methylene-5,6,7,8-tetrahydrofolate.

It belongs to the thymidylate synthase family. Bacterial-type ThyA subfamily. Homodimer.

It localises to the cytoplasm. The catalysed reaction is dUMP + (6R)-5,10-methylene-5,6,7,8-tetrahydrofolate = 7,8-dihydrofolate + dTMP. It participates in pyrimidine metabolism; dTTP biosynthesis. Its function is as follows. Catalyzes the reductive methylation of 2'-deoxyuridine-5'-monophosphate (dUMP) to 2'-deoxythymidine-5'-monophosphate (dTMP) while utilizing 5,10-methylenetetrahydrofolate (mTHF) as the methyl donor and reductant in the reaction, yielding dihydrofolate (DHF) as a by-product. This enzymatic reaction provides an intracellular de novo source of dTMP, an essential precursor for DNA biosynthesis. In Parabacteroides distasonis (strain ATCC 8503 / DSM 20701 / CIP 104284 / JCM 5825 / NCTC 11152), this protein is Thymidylate synthase.